Reading from the N-terminus, the 505-residue chain is Photosystem II CP47 reaction center protein (505 aa).

Over 1 to 19 the chain is Cytoplasmic; the sequence is GLPWYRVHTVLINDPGRLI. Positions 8, 22, 25, 99, and 113 each coordinate chlorophyll a. Residues 20–35 form a helical membrane-spanning segment; sequence AAHLMHTALVAGWAGS. Residues 36 to 99 lie on the Lumenal side of the membrane; the sequence is MALYELATFD…WSFEGVALAH (64 aa). A helical transmembrane segment spans residues 100–114; the sequence is IVLSGLLFLAACWHW. The Cytoplasmic segment spans residues 115–138; sequence VYWDLELFRDPRTGEPALDLPKMF. A helical transmembrane segment spans residues 139–155; it reads GIHLFLAGLLCFGFGAF. Residues histidine 141, histidine 156, histidine 200, histidine 201, and histidine 215 each contribute to the chlorophyll a site. Topologically, residues 156 to 201 are lumenal; the sequence is HLTGLFGPGMWVSDPYGLTGSVQPVAPEWGPDGFNPYNPGGVVAHH. A helical transmembrane segment spans residues 202 to 217; the sequence is IAAGIVGIIAGLFHIL. Residues 218-235 lie on the Cytoplasmic side of the membrane; that stretch reads VRPPQRLYKALRMGNIET. A helical membrane pass occupies residues 236–251; it reads VLSSSIAAVFFAAFVV. Over 252–455 the chain is Lumenal; sequence AGTMWYGSAT…PRGWFTFAHA (204 aa). Histidine 454, histidine 465, and histidine 468 together coordinate chlorophyll a. Residues 456–471 form a helical membrane-spanning segment; sequence VFALLFFFGHIWHGAR. Topologically, residues 472–505 are cytoplasmic; the sequence is TLFRDVFSGIDPELSPEQVEWGFYQKVGDVTTRK.

The protein belongs to the PsbB/PsbC family. PsbB subfamily. PSII is composed of 1 copy each of membrane proteins PsbA, PsbB, PsbC, PsbD, PsbE, PsbF, PsbH, PsbI, PsbJ, PsbK, PsbL, PsbM, PsbT, PsbX, PsbY, PsbZ, Psb30/Ycf12, peripheral proteins PsbO, CyanoQ (PsbQ), PsbU, PsbV and a large number of cofactors. It forms dimeric complexes. The cofactor is Binds multiple chlorophylls. PSII binds additional chlorophylls, carotenoids and specific lipids..

Its subcellular location is the cellular thylakoid membrane. One of the components of the core complex of photosystem II (PSII). It binds chlorophyll and helps catalyze the primary light-induced photochemical processes of PSII. PSII is a light-driven water:plastoquinone oxidoreductase, using light energy to abstract electrons from H(2)O, generating O(2) and a proton gradient subsequently used for ATP formation. This Thermostichus vulcanus (Synechococcus vulcanus) protein is Photosystem II CP47 reaction center protein.